We begin with the raw amino-acid sequence, 405 residues long: S-adenosylmethionine synthase (405 aa).

139-144 (GKGSAD) contributes to the ATP binding site.

It belongs to the AdoMet synthase 2 family. The cofactor is Mg(2+).

It catalyses the reaction L-methionine + ATP + H2O = S-adenosyl-L-methionine + phosphate + diphosphate. It participates in amino-acid biosynthesis; S-adenosyl-L-methionine biosynthesis; S-adenosyl-L-methionine from L-methionine: step 1/1. Catalyzes the formation of S-adenosylmethionine from methionine and ATP. This chain is S-adenosylmethionine synthase, found in Sulfurisphaera tokodaii (strain DSM 16993 / JCM 10545 / NBRC 100140 / 7) (Sulfolobus tokodaii).